The primary structure comprises 350 residues: Biotin synthase (350 aa).

The region spanning N41 to R268 is the Radical SAM core domain. [4Fe-4S] cluster is bound by residues C56, C60, and C63. [2Fe-2S] cluster is bound by residues C100, C131, C191, and R263.

This sequence belongs to the radical SAM superfamily. Biotin synthase family. Homodimer. The cofactor is [4Fe-4S] cluster. [2Fe-2S] cluster is required as a cofactor.

The catalysed reaction is (4R,5S)-dethiobiotin + (sulfur carrier)-SH + 2 reduced [2Fe-2S]-[ferredoxin] + 2 S-adenosyl-L-methionine = (sulfur carrier)-H + biotin + 2 5'-deoxyadenosine + 2 L-methionine + 2 oxidized [2Fe-2S]-[ferredoxin]. Its pathway is cofactor biosynthesis; biotin biosynthesis; biotin from 7,8-diaminononanoate: step 2/2. Catalyzes the conversion of dethiobiotin (DTB) to biotin by the insertion of a sulfur atom into dethiobiotin via a radical-based mechanism. The protein is Biotin synthase of Shewanella oneidensis (strain ATCC 700550 / JCM 31522 / CIP 106686 / LMG 19005 / NCIMB 14063 / MR-1).